A 205-amino-acid chain; its full sequence is uncharacterized protein (205 aa).

This is an uncharacterized protein from Caenorhabditis elegans.